The primary structure comprises 326 residues: Biotin synthase (326 aa).

One can recognise a Radical SAM core domain in the interval 50–279 (FNGEKVDVEQ…ESVIKISGGR (230 aa)). Positions 68, 72, and 75 each coordinate [4Fe-4S] cluster. [2Fe-2S] cluster contacts are provided by Cys112, Cys145, Cys204, and Lys274.

This sequence belongs to the radical SAM superfamily. Biotin synthase family. Homodimer. Requires [4Fe-4S] cluster as cofactor. It depends on [2Fe-2S] cluster as a cofactor.

It carries out the reaction (4R,5S)-dethiobiotin + (sulfur carrier)-SH + 2 reduced [2Fe-2S]-[ferredoxin] + 2 S-adenosyl-L-methionine = (sulfur carrier)-H + biotin + 2 5'-deoxyadenosine + 2 L-methionine + 2 oxidized [2Fe-2S]-[ferredoxin]. Its pathway is cofactor biosynthesis; biotin biosynthesis; biotin from 7,8-diaminononanoate: step 2/2. Catalyzes the conversion of dethiobiotin (DTB) to biotin by the insertion of a sulfur atom into dethiobiotin via a radical-based mechanism. In Nitrosopumilus maritimus (strain SCM1), this protein is Biotin synthase.